The sequence spans 558 residues: uncharacterized protein (558 aa).

Residues 47–78 adopt a coiled-coil conformation; sequence DFDDLNSIFKDFQKQKKNLKDNILKFYNKKKE. Disordered regions lie at residues 239 to 266 and 424 to 447; these read NNNNIKTETESEIESKSESESESESKIE and NNNNNNNNNNNNNNNNNNNNNSGE. Positions 245 to 266 are enriched in basic and acidic residues; the sequence is TETESEIESKSESESESESKIE. Over residues 424 to 444 the composition is skewed to low complexity; the sequence is NNNNNNNNNNNNNNNNNNNNN.

This is an uncharacterized protein from Dictyostelium discoideum (Social amoeba).